A 414-amino-acid chain; its full sequence is MSNNLIIINAHIVTPQGRTARKGEAMNELLNIPCGTVRVTDGIITYVGENRISHEKPGYKVLDARGNVLLPGFVDSHTHLVFGGFRPDEFIWRLNGDSYMSIMERGGGIINTVRATREASFEELKHKAEWFLDTMSRMGVTTVEGKSGYGLDRDTELKQLSIMQAINECPDRKVDIATTFLGAHALPEEYKGRSDAYIDFLINEMLPMIHQKQLAENCDIFCEKGVFTVEQSRKLLKAAQALGFGTKLHADEIVSFGGAELAGELKALSADHLLQASDEGIKALAQNNVVATLLPLTAFTLKEPYARGRKMIDSGCAVALATDLNPGSCFSGSIPLTFALACIYMKLTVAEAITAITLNGAAALGRADRIGSIEAGKQGDFVLLGTDNPHILPYYTGMNAVKLTIKGGRILHSN.

His-77 and His-79 together coordinate Fe(3+). 2 residues coordinate Zn(2+): His-77 and His-79. 4-imidazolone-5-propanoate is bound by residues Arg-86, Tyr-149, and His-184. Residue Tyr-149 coordinates N-formimidoyl-L-glutamate. His-249 serves as a coordination point for Fe(3+). A Zn(2+)-binding site is contributed by His-249. 4-imidazolone-5-propanoate is bound at residue Glu-252. Asp-323 serves as a coordination point for Fe(3+). Position 323 (Asp-323) interacts with Zn(2+). Residues Asn-325 and Gly-327 each contribute to the N-formimidoyl-L-glutamate site. Ser-328 contributes to the 4-imidazolone-5-propanoate binding site.

This sequence belongs to the metallo-dependent hydrolases superfamily. HutI family. Requires Zn(2+) as cofactor. It depends on Fe(3+) as a cofactor.

The protein resides in the cytoplasm. The catalysed reaction is 4-imidazolone-5-propanoate + H2O = N-formimidoyl-L-glutamate. Its pathway is amino-acid degradation; L-histidine degradation into L-glutamate; N-formimidoyl-L-glutamate from L-histidine: step 3/3. Its function is as follows. Catalyzes the hydrolytic cleavage of the carbon-nitrogen bond in imidazolone-5-propanoate to yield N-formimidoyl-L-glutamate. It is the third step in the universal histidine degradation pathway. The polypeptide is Imidazolonepropionase (Phocaeicola vulgatus (strain ATCC 8482 / DSM 1447 / JCM 5826 / CCUG 4940 / NBRC 14291 / NCTC 11154) (Bacteroides vulgatus)).